A 71-amino-acid chain; its full sequence is Putative antitoxin VapB15 (71 aa).

The protein belongs to the UPF0330 family.

Functionally, possibly the antitoxin component of a type II toxin-antitoxin (TA) system. Its cognate toxin is VapC15 (Potential). The chain is Putative antitoxin VapB15 (vapB15) from Archaeoglobus fulgidus (strain ATCC 49558 / DSM 4304 / JCM 9628 / NBRC 100126 / VC-16).